A 1482-amino-acid polypeptide reads, in one-letter code: Chromosome partition protein MukB (1482 aa).

34-41 provides a ligand contact to ATP; that stretch reads GGNGAGKS. Residues 333-665 adopt a coiled-coil conformation; that stretch reads ASDHLNLVQT…LEKQIERLSQ (333 aa). Residues 666–783 form a flexible hinge region; that stretch reads PSGAEDSRMI…ELPLFGRAAR (118 aa). Coiled coils occupy residues 784-1116 and 1209-1260; these read ENRL…AKAG and VDAI…MLNQ.

Belongs to the SMC family. MukB subfamily. Homodimerization via its hinge domain. Binds to DNA via its C-terminal region. Interacts, and probably forms a ternary complex, with MukE and MukF via its C-terminal region. The complex formation is stimulated by calcium or magnesium. Interacts with tubulin-related protein FtsZ.

The protein localises to the cytoplasm. It localises to the nucleoid. Its function is as follows. Plays a central role in chromosome condensation, segregation and cell cycle progression. Functions as a homodimer, which is essential for chromosome partition. Involved in negative DNA supercoiling in vivo, and by this means organize and compact chromosomes. May achieve or facilitate chromosome segregation by condensation DNA from both sides of a centrally located replisome during cell division. The chain is Chromosome partition protein MukB from Photorhabdus laumondii subsp. laumondii (strain DSM 15139 / CIP 105565 / TT01) (Photorhabdus luminescens subsp. laumondii).